The sequence spans 42 residues: Photosystem II reaction center protein J (42 aa).

A helical membrane pass occupies residues Ile10–Phe30.

Belongs to the PsbJ family. As to quaternary structure, PSII is composed of 1 copy each of membrane proteins PsbA, PsbB, PsbC, PsbD, PsbE, PsbF, PsbH, PsbI, PsbJ, PsbK, PsbL, PsbM, PsbT, PsbX, PsbY, PsbZ, Psb30/Ycf12, at least 3 peripheral proteins of the oxygen-evolving complex and a large number of cofactors. It forms dimeric complexes.

Its subcellular location is the plastid. It is found in the chloroplast thylakoid membrane. In terms of biological role, one of the components of the core complex of photosystem II (PSII). PSII is a light-driven water:plastoquinone oxidoreductase that uses light energy to abstract electrons from H(2)O, generating O(2) and a proton gradient subsequently used for ATP formation. It consists of a core antenna complex that captures photons, and an electron transfer chain that converts photonic excitation into a charge separation. The sequence is that of Photosystem II reaction center protein J from Chlamydomonas reinhardtii (Chlamydomonas smithii).